We begin with the raw amino-acid sequence, 85 residues long: Transcriptional repressor protein KorC (85 aa).

Positions Glu-28–Gly-47 form a DNA-binding region, H-T-H motif.

Acts with KorA as corepressor in the control of the kilC and kilE operons. This chain is Transcriptional repressor protein KorC (korC), found in Escherichia coli.